Consider the following 920-residue polypeptide: Translation initiation factor IF-2 (920 aa).

Composition is skewed to basic and acidic residues over residues 149 to 175 (EAEMKAAEEARQKEVAAPVVEKEEKPV), 186 to 197 (AEKKATADKAAK), and 255 to 265 (AKPEGADDKKK). Disordered regions lie at residues 149-197 (EAEM…KAAK) and 245-319 (EAKK…KQRQ). Over residues 301-311 (SSGGVGGWRSG) the composition is skewed to gly residues. The 168-residue stretch at 418–585 (PRPPVVTVMG…NVLLQAEILE (168 aa)) folds into the tr-type G domain. A G1 region spans residues 427 to 434 (GHVDHGKT). 427–434 (GHVDHGKT) is a binding site for GTP. A G2 region spans residues 452 to 456 (GITQH). Residues 473-476 (DTPG) form a G3 region. GTP is bound by residues 473–477 (DTPGH) and 527–530 (NKID). Positions 527-530 (NKID) are G4. The segment at 563–565 (SAK) is G5.

Belongs to the TRAFAC class translation factor GTPase superfamily. Classic translation factor GTPase family. IF-2 subfamily.

It is found in the cytoplasm. Functionally, one of the essential components for the initiation of protein synthesis. Protects formylmethionyl-tRNA from spontaneous hydrolysis and promotes its binding to the 30S ribosomal subunits. Also involved in the hydrolysis of GTP during the formation of the 70S ribosomal complex. In Polynucleobacter asymbioticus (strain DSM 18221 / CIP 109841 / QLW-P1DMWA-1) (Polynucleobacter necessarius subsp. asymbioticus), this protein is Translation initiation factor IF-2.